A 128-amino-acid polypeptide reads, in one-letter code: MGRLFVIDLEGLVYSCKYCQTHFAVTNDIISKSFHCKHGRAYLFDNVVNVTVGEKEHRVMITGWHTVADIFCVSCGSLVGWKYEIAYDKSQKYKEGKFILERFKVLGPYGGGYDMNQNEPMTGSDDEE.

Residues 12 to 109 (LVYSCKYCQT…LERFKVLGPY (98 aa)) form the Yippee domain. Positions 16, 19, 72, and 75 each coordinate Zn(2+).

This sequence belongs to the yippee family.

This is Protein yippee-like At3g08990 from Arabidopsis thaliana (Mouse-ear cress).